A 117-amino-acid chain; its full sequence is MNSFVSTVLLLSVTIALVSGYPSQLQTTCVTKAKSCTMFFLNGVYCTECTYSGTLELKIGSTCTFSIYEKKVASQPNENSQNEVAQCKQSSCYSNQYVPVDCAAAFGNEYITYIENQ.

The N-terminal stretch at 1 to 20 (MNSFVSTVLLLSVTIALVSG) is a signal peptide.

The protein belongs to the UPF0375 family. In terms of tissue distribution, expressed in the uterine epithelium.

It localises to the secreted. Its function is as follows. Negatively regulates the egg-laying rate by promoting retention of fertilized eggs. This chain is UPF0375 protein Y45F10C.2, found in Caenorhabditis elegans.